Consider the following 246-residue polypeptide: Probable transcriptional regulatory protein YebC (246 aa).

A disordered region spans residues 1 to 20 (MAGHSKWANTRHRKAAQDAK).

The protein belongs to the TACO1 family.

It is found in the cytoplasm. This is Probable transcriptional regulatory protein YebC from Shigella flexneri.